Consider the following 186-residue polypeptide: Enhancer of split m7 protein (186 aa).

Residues 13–68 (YRKVMKPLLERKRRARINKCLDELKDLMAECVAQTGDAKFEKADILEVTVQHLRKL) form the bHLH domain. The Orange domain occupies 83–116 (FRAGYIRAANEVSRALASLPRVDVAFGTTLMTHL). The WRPW motif motif lies at 183–186 (WRPW).

Transcription repression requires formation of a complex with a corepressor protein (Groucho). Forms homodimers.

It localises to the nucleus. In terms of biological role, participates in the control of cell fate choice by uncommitted neuroectodermal cells in the embryo. Transcriptional repressor. Binds DNA on N-box motifs: 5'-CACNAG-3'. The polypeptide is Enhancer of split m7 protein (Drosophila melanogaster (Fruit fly)).